A 1767-amino-acid polypeptide reads, in one-letter code: Trans-Golgi network-localized SYP41-interacting protein 1 (1767 aa).

The disordered stretch occupies residues 1 to 72 (MHEKDDLPQD…LTTDDDDNDD (72 aa)). At 1 to 1748 (MHEKDDLPQD…RVLMSRPQAR (1748 aa)) the chain is on the cytoplasmic side. A compositionally biased stretch (acidic residues) spans 16-32 (IENDDESNGQEEEELDP). Coiled-coil stretches lie at residues 276 to 436 (LSHL…MSTA), 493 to 516 (VRSL…LKDL), 570 to 590 (KSNI…MEET), 684 to 805 (VSNL…LQQS), and 845 to 1082 (IQEV…LSSK). A compositionally biased stretch (polar residues) spans 1177–1190 (DNSVNTEPENSQGS). The segment at 1177 to 1198 (DNSVNTEPENSQGSAADEDEIS) is disordered. 4 coiled-coil regions span residues 1251–1310 (NSSL…FQEN), 1362–1424 (IRDM…WHEK), 1522–1542 (LKKA…AKNE), and 1603–1630 (LAGS…KAIQ). Residues 1749-1766 (LGVMVYSLLLHLWLLASI) form a helical; Anchor for type IV membrane protein membrane-spanning segment. Residue leucine 1767 is a topological domain, vesicular.

In terms of assembly, interacts with SYP41. As to expression, expressed ubiquitously in roots, leaves and flowers, and, to a lower extent, in stems.

The protein resides in the golgi apparatus. The protein localises to the trans-Golgi network membrane. In terms of biological role, tethering factor involved in vesicle fusion at the trans-Golgi network (TGN) thus being required for efficient protein trafficking to the vacuole. Implicated in resistance to salt and osmotic stresses. Modulates the cell morphology (e.g. epidermal cell file rotation (CFR) and cell expansion) in mature regions of roots and the base of hypocotyls as well as root skewing, a process leading to root movement within the soil in order to maximize anchorage and nutrient acquisition, probably by regulating microtubule stabilization independently of their orientation. The protein is Trans-Golgi network-localized SYP41-interacting protein 1 of Arabidopsis thaliana (Mouse-ear cress).